A 166-amino-acid polypeptide reads, in one-letter code: NAD(P)H-quinone oxidoreductase subunit I, chloroplastic (166 aa).

4Fe-4S ferredoxin-type domains are found at residues 55-84 and 95-124; these read GRIHFEFDKCIACEVCVRVCPIDLPVVDWK and LNYSIDFGICIFCGNCVEYCPTNCLSMTEE. Residues Cys-64, Cys-67, Cys-70, Cys-74, Cys-104, Cys-107, Cys-110, and Cys-114 each contribute to the [4Fe-4S] cluster site.

Belongs to the complex I 23 kDa subunit family. NDH is composed of at least 16 different subunits, 5 of which are encoded in the nucleus. The cofactor is [4Fe-4S] cluster.

It localises to the plastid. Its subcellular location is the chloroplast thylakoid membrane. The enzyme catalyses a plastoquinone + NADH + (n+1) H(+)(in) = a plastoquinol + NAD(+) + n H(+)(out). It catalyses the reaction a plastoquinone + NADPH + (n+1) H(+)(in) = a plastoquinol + NADP(+) + n H(+)(out). NDH shuttles electrons from NAD(P)H:plastoquinone, via FMN and iron-sulfur (Fe-S) centers, to quinones in the photosynthetic chain and possibly in a chloroplast respiratory chain. The immediate electron acceptor for the enzyme in this species is believed to be plastoquinone. Couples the redox reaction to proton translocation, and thus conserves the redox energy in a proton gradient. The protein is NAD(P)H-quinone oxidoreductase subunit I, chloroplastic of Oteiza scandens (Climbing oteiza).